A 76-amino-acid polypeptide reads, in one-letter code: Sec-independent protein translocase protein TatA (76 aa).

Residues Met-1–Gly-21 traverse the membrane as a helical segment. The disordered stretch occupies residues Lys-40–Ala-76. Basic and acidic residues predominate over residues Asn-64–Ala-76.

Belongs to the TatA/E family. In terms of assembly, the Tat system comprises two distinct complexes: a TatABC complex, containing multiple copies of TatA, TatB and TatC subunits, and a separate TatA complex, containing only TatA subunits. Substrates initially bind to the TatABC complex, which probably triggers association of the separate TatA complex to form the active translocon.

It is found in the cell inner membrane. In terms of biological role, part of the twin-arginine translocation (Tat) system that transports large folded proteins containing a characteristic twin-arginine motif in their signal peptide across membranes. TatA could form the protein-conducting channel of the Tat system. The polypeptide is Sec-independent protein translocase protein TatA (Burkholderia cenocepacia (strain HI2424)).